A 429-amino-acid polypeptide reads, in one-letter code: CBL-interacting serine/threonine-protein kinase 7 (429 aa).

Residues 25-280 (YELGRRLGSG…IETVMKTNWF (256 aa)) enclose the Protein kinase domain. ATP contacts are provided by residues 31–39 (LGSGSFAKV) and Lys54. Asp149 serves as the catalytic Proton acceptor. Residues 167 to 195 (DFGLSALPEHLQNGLLHTACGTPAYTAPE) form an activation loop region. Residue Ser171 is modified to Phosphoserine. A Phosphothreonine modification is found at Thr184. One can recognise an NAF domain in the interval 302–326 (SSVNSITAFDLISLSSGLDLSGLFE). A PPI region spans residues 330–363 (KKERRFTAKVSGVEVEEKAKMIGEKLGYVVKKKM).

It belongs to the protein kinase superfamily. CAMK Ser/Thr protein kinase family. SNF1 subfamily. In terms of assembly, interacts with CBL1, CBL2 and CBL3. The cofactor is Mn(2+). Autophosphorylated. In terms of tissue distribution, strongly expressed in leaves, but barely expressed in roots, stems or flowers.

It carries out the reaction L-seryl-[protein] + ATP = O-phospho-L-seryl-[protein] + ADP + H(+). It catalyses the reaction L-threonyl-[protein] + ATP = O-phospho-L-threonyl-[protein] + ADP + H(+). In terms of biological role, CIPK serine-threonine protein kinases interact with CBL proteins. Binding of a CBL protein to the regulatory NAF domain of CIPK protein lead to the activation of the kinase in a calcium-dependent manner. Phosphorylates the rice sucrose synthase (SuSy) in vitro in an allosteric manner. Involved in cold response. The chain is CBL-interacting serine/threonine-protein kinase 7 (CIPK7) from Arabidopsis thaliana (Mouse-ear cress).